Here is a 236-residue protein sequence, read N- to C-terminus: Phosphoribosylaminoimidazole-succinocarboxamide synthase (236 aa).

It belongs to the SAICAR synthetase family.

The catalysed reaction is 5-amino-1-(5-phospho-D-ribosyl)imidazole-4-carboxylate + L-aspartate + ATP = (2S)-2-[5-amino-1-(5-phospho-beta-D-ribosyl)imidazole-4-carboxamido]succinate + ADP + phosphate + 2 H(+). It participates in purine metabolism; IMP biosynthesis via de novo pathway; 5-amino-1-(5-phospho-D-ribosyl)imidazole-4-carboxamide from 5-amino-1-(5-phospho-D-ribosyl)imidazole-4-carboxylate: step 1/2. This is Phosphoribosylaminoimidazole-succinocarboxamide synthase from Campylobacter jejuni subsp. jejuni serotype O:6 (strain 81116 / NCTC 11828).